The chain runs to 429 residues: Glutamate-1-semialdehyde 2,1-aminomutase 2 (429 aa).

Residue lysine 268 is modified to N6-(pyridoxal phosphate)lysine.

It belongs to the class-III pyridoxal-phosphate-dependent aminotransferase family. HemL subfamily. Homodimer. The cofactor is pyridoxal 5'-phosphate.

The protein resides in the cytoplasm. It carries out the reaction (S)-4-amino-5-oxopentanoate = 5-aminolevulinate. It participates in porphyrin-containing compound metabolism; protoporphyrin-IX biosynthesis; 5-aminolevulinate from L-glutamyl-tRNA(Glu): step 2/2. The chain is Glutamate-1-semialdehyde 2,1-aminomutase 2 from Bacillus cereus (strain B4264).